We begin with the raw amino-acid sequence, 233 residues long: Ribonuclease HII (233 aa).

The RNase H type-2 domain occupies 26–215 (QLVAGIDEVG…VRASEGEGLE (190 aa)). A divalent metal cation-binding residues include Asp-32, Glu-33, and Asp-124. Residues 211–233 (GEGLETAAGRQSSEGKKGRRPRG) form a disordered region.

This sequence belongs to the RNase HII family. It depends on Mn(2+) as a cofactor. The cofactor is Mg(2+).

It localises to the cytoplasm. The catalysed reaction is Endonucleolytic cleavage to 5'-phosphomonoester.. Endonuclease that specifically degrades the RNA of RNA-DNA hybrids. This is Ribonuclease HII from Syntrophobacter fumaroxidans (strain DSM 10017 / MPOB).